We begin with the raw amino-acid sequence, 721 residues long: MMTSLQLETSLPAVEEQVQREKDNDSAEDSHTASTTPTRIPHPAVARFRRSASLRLRGNPAELGLRAEHCPAGGGGFSSRAKLTAIPSSLETRSHPVHLRRNRSWCNLGHKTEQEPEVEASTEALCNAAQCLSLDKEALAPKVGNSSMANGKPRNLSLQLNGGSDISSSGTSSSSSNNKESSPRTTRTPRTPQTPQTPQTPASGVAASVAETPHSCIRQGNCVKANQVKLSTLHESKISPRTPPVTPDSPSTYLDDDIDSMYSFATTTSGRSTMSCEHPYVARNGTTFSGRKMKYVVHCSNYAGQVGPDYLTPTQRAQRQIRRLKELLCIARQDLEQKDTELLRLTREVVELRLFKASLSSPEERSASSDAVTVREAELKTSQDVSPIVDMVDEGNAKGSPRHLSRQQQQQANHSLQAMQMSAEMQSSYADSGHFEDLTMSSVHSKDSQTQSEACGTATPDGEADVGCGAGGDSASNLENYELQRQELISMYEHRIEELIRSQDSATSDLKRSHNDKVEALLQKLAECNTRYSDMVPDYEQAKQRIRELEKQLEDLQRKLIEHEEKQNKMYLHMYQQGQEAERISRADQALDLAQRQPESKVSINELLHQLQSTQDELENIRASECRMRECGSNHALLTAKEAISLWVLGARKTIYRRLLEAQKNRTHVDPEVTLQFLKSAIFYFLTDKENSQGHLQAIESILEFTDAEKQKISAANRTPK.

Disordered regions lie at residues 1–42 (MMTS…RIPH), 143–210 (VGNS…ASVA), 360–379 (SSPE…EAEL), 393–428 (DEGN…MQSS), and 441–471 (SSVH…CGAG). Positions 17 to 31 (QVQREKDNDSAEDSH) are enriched in basic and acidic residues. Residues 161 to 201 (NGGSDISSSGTSSSSSNNKESSPRTTRTPRTPQTPQTPQTP) are compositionally biased toward low complexity. Residues 362–379 (PEERSASSDAVTVREAEL) are compositionally biased toward basic and acidic residues. Residues 406 to 420 (RQQQQQANHSLQAMQ) are compositionally biased toward low complexity. Over residues 441–454 (SSVHSKDSQTQSEA) the composition is skewed to polar residues. Residues 511–569 (KRSHNDKVEALLQKLAECNTRYSDMVPDYEQAKQRIRELEKQLEDLQRKLIEHEEKQNK) are a coiled coil. The GRIP domain occupies 668-716 (HVDPEVTLQFLKSAIFYFLTDKENSQGHLQAIESILEFTDAEKQKISAA).

As to expression, expressed in the third antennal segment and the maxillary palp, with increased expression near the cuticle of both olfactory organs. Also detected in the second antenna segment. In the brain, expressed in the central nervous system, with high levels of expression in the visual system including the retina and optic lobe, and uniform expression in the cortex. Detected in the thorax and abdomen, with increased expression in the ventral ganglion. In males, detected in the reproductive tract including the ejaculatory bulb and testis.

In terms of biological role, in adult males, modulates sexual behavior by playing a role in sex discrimination and maintaining normal levels of sexual activity towards both males and females. The sequence is that of Protein quick-to-court from Drosophila melanogaster (Fruit fly).